A 152-amino-acid polypeptide reads, in one-letter code: MWFPQIIAGMAAGGAASAMTPGKVLFTNALGLGCSRSRGLFLEMFGTAVLCFTVLMTAVEKRETNFMAALPIGISLFMAHMALTGYTGTGVNPARSLGAAVAARYFPHYHWIYWISPLLGAFLAWSVWQLLQILDYTTYVNAEKAAGQKKED.

The Cytoplasmic portion of the chain corresponds to 1–5 (MWFPQ). Residues 6-26 (IIAGMAAGGAASAMTPGKVLF) form a helical membrane-spanning segment. Over 27–38 (TNALGLGCSRSR) the chain is Extracellular. A helical membrane pass occupies residues 39-59 (GLFLEMFGTAVLCFTVLMTAV). The Cytoplasmic portion of the chain corresponds to 60 to 65 (EKRETN). The chain crosses the membrane as a helical span at residues 66–86 (FMAALPIGISLFMAHMALTGY). Over 87-110 (TGTGVNPARSLGAAVAARYFPHYH) the chain is Extracellular. The NPA motif lies at 92–94 (NPA). The chain crosses the membrane as a helical span at residues 111-131 (WIYWISPLLGAFLAWSVWQLL). Over 132 to 152 (QILDYTTYVNAEKAAGQKKED) the chain is Cytoplasmic.

Belongs to the MIP/aquaporin (TC 1.A.8) family.

The protein localises to the membrane. This is an uncharacterized protein from Saccharomyces cerevisiae (strain YJM789) (Baker's yeast).